The following is a 203-amino-acid chain: Glutathione-specific gamma-glutamylcyclotransferase (203 aa).

12-17 (VFGYGS) serves as a coordination point for substrate. The active-site Proton acceptor is Glu105.

This sequence belongs to the gamma-glutamylcyclotransferase family. ChaC subfamily.

The protein localises to the cytoplasm. The protein resides in the nucleus. The catalysed reaction is glutathione = L-cysteinylglycine + 5-oxo-L-proline. Its function is as follows. Gamma-glutamylcyclotransferase acting specifically on glutathione, but not on other gamma-glutamyl peptides. Allows utilization of gluthathione through subsequent cleavage of the Cys-Gly dipeptide by Cys-Gly metallodipeptidase dug1. The polypeptide is Glutathione-specific gamma-glutamylcyclotransferase (Schizosaccharomyces pombe (strain 972 / ATCC 24843) (Fission yeast)).